The primary structure comprises 194 residues: Nucleoside triphosphate pyrophosphatase (194 aa).

Residue aspartate 68 is the Proton acceptor of the active site.

Belongs to the Maf family. The cofactor is a divalent metal cation.

The protein localises to the cytoplasm. The catalysed reaction is a ribonucleoside 5'-triphosphate + H2O = a ribonucleoside 5'-phosphate + diphosphate + H(+). The enzyme catalyses a 2'-deoxyribonucleoside 5'-triphosphate + H2O = a 2'-deoxyribonucleoside 5'-phosphate + diphosphate + H(+). Nucleoside triphosphate pyrophosphatase. May have a dual role in cell division arrest and in preventing the incorporation of modified nucleotides into cellular nucleic acids. The polypeptide is Nucleoside triphosphate pyrophosphatase (Corynebacterium jeikeium (strain K411)).